Reading from the N-terminus, the 138-residue chain is MLIPRRVKHRKQHHPGRSGAATGGTEVSFGEWGIQALSPAYVTNRQIESARIAMTRHIKRGGKVWINIYPDRPLTKKPAETRMGSGKGSPEWWVANVKPGRVLFELSGVNEEVAREALRLAIHKLPLKARIVRREGGE.

Residues 1-16 (MLIPRRVKHRKQHHPG) show a composition bias toward basic residues. The tract at residues 1 to 25 (MLIPRRVKHRKQHHPGRSGAATGGT) is disordered.

It belongs to the universal ribosomal protein uL16 family. Part of the 50S ribosomal subunit.

Functionally, binds 23S rRNA and is also seen to make contacts with the A and possibly P site tRNAs. This is Large ribosomal subunit protein uL16 from Pseudarthrobacter chlorophenolicus (strain ATCC 700700 / DSM 12829 / CIP 107037 / JCM 12360 / KCTC 9906 / NCIMB 13794 / A6) (Arthrobacter chlorophenolicus).